The sequence spans 574 residues: uncharacterized protein (574 aa).

This is an uncharacterized protein from Homo sapiens (Human).